A 419-amino-acid polypeptide reads, in one-letter code: Protein arginine N-methyltransferase 8-B (419 aa).

The segment covering Met1 to Arg14 has biased composition (basic residues). Positions Met1–Ala79 are disordered. Residue Gly2 is the site of N-myristoyl glycine attachment. Residues Gln33–His63 are compositionally biased toward low complexity. Arg83 is subject to Omega-N-methylarginine. Arg98 bears the Asymmetric dimethylarginine mark. The 305-residue stretch at Arg98 to Asp402 folds into the SAM-dependent MTase PRMT-type domain. S-adenosyl-L-methionine-binding positions include His111, Arg120, Gly144, Gly144 to Thr147, Glu166, and Glu195. Catalysis depends on residues Glu210 and Glu219.

It belongs to the class I-like SAM-binding methyltransferase superfamily. Protein arginine N-methyltransferase family. PRMT8 subfamily. In terms of assembly, homodimer. Tetramer; individual homodimers associates to form a homotetramer. Homooctamer; individual homodimers associates to form a homooctamer and homooligomerization is required for proper localization to the cell membrane.

The protein localises to the cell membrane. The catalysed reaction is L-arginyl-[protein] + S-adenosyl-L-methionine = N(omega)-methyl-L-arginyl-[protein] + S-adenosyl-L-homocysteine + H(+). It catalyses the reaction L-arginyl-[protein] + 2 S-adenosyl-L-methionine = N(omega),N(omega)-dimethyl-L-arginyl-[protein] + 2 S-adenosyl-L-homocysteine + 2 H(+). S-adenosyl-L-methionine-dependent and membrane-associated arginine methyltransferase that can both catalyze the formation of omega-N monomethylarginine (MMA) and asymmetrical dimethylarginine (aDMA). This chain is Protein arginine N-methyltransferase 8-B (prmt8b), found in Danio rerio (Zebrafish).